The chain runs to 465 residues: 5-cytosine rRNA methyltransferase nsun-4 (465 aa).

A mitochondrion-targeting transit peptide spans 1 to 6 (MSCLRQ). The span at 106-130 (QAIETKRKSVEEKANRETQKVKHEI) shows a compositional bias: basic and acidic residues. Positions 106–145 (QAIETKRKSVEEKANRETQKVKHEISNPSTSTNTEDSEPD) are disordered. S-adenosyl-L-methionine-binding positions include 260-266 (CAAPGGK), aspartate 283, aspartate 316, and aspartate 335. The active-site Nucleophile is cysteine 390.

Belongs to the class I-like SAM-binding methyltransferase superfamily. RsmB/NOP family.

It localises to the mitochondrion. It carries out the reaction a cytidine in rRNA + S-adenosyl-L-methionine = a 5-methylcytidine in rRNA + S-adenosyl-L-homocysteine + H(+). The catalysed reaction is a cytidine in tRNA + S-adenosyl-L-methionine = a 5-methylcytidine in tRNA + S-adenosyl-L-homocysteine + H(+). Mitochondrial methyltransferase which methylates cytosine to 5-methylcytosine (m5C) in rRNAs and tRNAs at multiple sites. May play a role in the translation of leucine and proline codons. The sequence is that of 5-cytosine rRNA methyltransferase nsun-4 from Caenorhabditis elegans.